We begin with the raw amino-acid sequence, 395 residues long: Testis-expressed protein 44 (395 aa).

Disordered regions lie at residues 1 to 32, 46 to 100, 133 to 215, and 235 to 258; these read MALP…PLTA, WQDI…LQVS, KMSQ…SDES, and FPPP…GRRP. Polar residues predominate over residues 53–65; it reads SFKTATPRAISTS. A compositionally biased stretch (low complexity) spans 87 to 98; sequence PLLPSQNPSPLQ. The span at 192–207 shows a compositional bias: basic and acidic residues; sequence SAEEKAEHPKAPHPEA. S333 is modified (phosphoserine).

Testis. Detected in germ cells at all stages of the seminiferous epithelium, strong expression in elongating spermatids (at protein level).

The protein resides in the cytoplasm. The chain is Testis-expressed protein 44 from Homo sapiens (Human).